The chain runs to 480 residues: Proline--tRNA ligase (480 aa).

Belongs to the class-II aminoacyl-tRNA synthetase family. ProS type 3 subfamily. In terms of assembly, homodimer.

It is found in the cytoplasm. The catalysed reaction is tRNA(Pro) + L-proline + ATP = L-prolyl-tRNA(Pro) + AMP + diphosphate. In terms of biological role, catalyzes the attachment of proline to tRNA(Pro) in a two-step reaction: proline is first activated by ATP to form Pro-AMP and then transferred to the acceptor end of tRNA(Pro). In Alkaliphilus oremlandii (strain OhILAs) (Clostridium oremlandii (strain OhILAs)), this protein is Proline--tRNA ligase.